The chain runs to 520 residues: Cytochrome P450 4F3 (520 aa).

Residues 11 to 31 (LWPMAASPWLLLLLVGASWLL) traverse the membrane as a helical segment. Heme contacts are provided by E328 and C468.

It belongs to the cytochrome P450 family. The cofactor is heme. In terms of tissue distribution, selectively expressed in blood neutrophils and bone marrow cells. Coexpressed with CYP4F3B in prostate, ileum and trachea. As to expression, selectively expressed in liver and kidney. It is also the predominant CYP4F isoform in trachea and tissues of the gastrointestinal tract.

It is found in the endoplasmic reticulum membrane. The protein localises to the microsome membrane. It carries out the reaction an organic molecule + reduced [NADPH--hemoprotein reductase] + O2 = an alcohol + oxidized [NADPH--hemoprotein reductase] + H2O + H(+). The catalysed reaction is leukotriene B4 + reduced [NADPH--hemoprotein reductase] + O2 = 20-hydroxy-leukotriene B4 + oxidized [NADPH--hemoprotein reductase] + H2O + H(+). It catalyses the reaction 20-hydroxy-leukotriene B4 + reduced [NADPH--hemoprotein reductase] + O2 = 20-oxo-leukotriene B4 + oxidized [NADPH--hemoprotein reductase] + 2 H2O + H(+). The enzyme catalyses 20-oxo-leukotriene B4 + reduced [NADPH--hemoprotein reductase] + O2 = 20-carboxy-leukotriene B4 + oxidized [NADPH--hemoprotein reductase] + H2O + 2 H(+). It carries out the reaction (5Z,8Z,11Z)-eicosatrienoate + reduced [NADPH--hemoprotein reductase] + O2 = 20-hydroxy-(5Z,8Z,11Z)-eicosatrienoate + oxidized [NADPH--hemoprotein reductase] + H2O + H(+). The catalysed reaction is (5Z,8Z,11Z,14Z)-eicosatetraenoate + reduced [NADPH--hemoprotein reductase] + O2 = 20-hydroxy-(5Z,8Z,11Z,14Z)-eicosatetraenoate + oxidized [NADPH--hemoprotein reductase] + H2O + H(+). It catalyses the reaction (5Z,8Z,11Z,14Z,17Z)-eicosapentaenoate + reduced [NADPH--hemoprotein reductase] + O2 = 19-hydroxy-(5Z,8Z,11Z,14Z,17Z)-eicosapentaenoate + oxidized [NADPH--hemoprotein reductase] + H2O + H(+). The enzyme catalyses (5Z,8Z,11Z,14Z,17Z)-eicosapentaenoate + reduced [NADPH--hemoprotein reductase] + O2 = 20-hydroxy-(5Z,8Z,11Z,14Z,17Z)-eicosapentaenoate + oxidized [NADPH--hemoprotein reductase] + H2O + H(+). It carries out the reaction (4Z,7Z,10Z,13Z,16Z,19Z)-docosahexaenoate + reduced [NADPH--hemoprotein reductase] + O2 = 21-hydroxy-(4Z,7Z,10Z,13Z,16Z,19Z)-docosahexaenoate + oxidized [NADPH--hemoprotein reductase] + H2O + H(+). The catalysed reaction is (4Z,7Z,10Z,13Z,16Z,19Z)-docosahexaenoate + reduced [NADPH--hemoprotein reductase] + O2 = 22-hydroxy-(4Z,7Z,10Z,13Z,16Z,19Z)-docosahexaenoate + oxidized [NADPH--hemoprotein reductase] + H2O + H(+). It catalyses the reaction 8,9-epoxy-(5Z,11Z,14Z)-eicosatrienoate + reduced [NADPH--hemoprotein reductase] + O2 = 20-hydroxy-8,9-epoxy-(5Z,11Z,14Z)-eicosatrienoate + oxidized [NADPH--hemoprotein reductase] + H2O + H(+). The enzyme catalyses 11,12-epoxy-(5Z,8Z,14Z)-eicosatrienoate + reduced [NADPH--hemoprotein reductase] + O2 = 20-hydroxy-11,12-epoxy-(5Z,8Z,14Z)-eicosatrienoate + oxidized [NADPH--hemoprotein reductase] + H2O + H(+). It carries out the reaction 14,15-epoxy-(5Z,8Z,11Z)-eicosatrienoate + reduced [NADPH--hemoprotein reductase] + O2 = 20-hydroxy-14,15-epoxy-(5Z,8Z,11Z)-eicosatrienoate + oxidized [NADPH--hemoprotein reductase] + H2O + H(+). The catalysed reaction is 12,13-epoxy-(9Z)-octadecenoate + reduced [NADPH--hemoprotein reductase] + O2 = 18-hydroxy-12,13-epoxy-(9Z)-octadecenoate + oxidized [NADPH--hemoprotein reductase] + H2O + H(+). It catalyses the reaction 9,10-epoxy-(12Z)-octadecenoate + reduced [NADPH--hemoprotein reductase] + O2 = 18-hydroxy-9,10-epoxy-(12Z)-octadecenoate + oxidized [NADPH--hemoprotein reductase] + H2O + H(+). The enzyme catalyses 9,10-epoxyoctadecanoate + reduced [NADPH--hemoprotein reductase] + O2 = 18-hydroxy-9,10-epoxy-octadecanoate + oxidized [NADPH--hemoprotein reductase] + H2O + H(+). It carries out the reaction (12R)-hydroxy-(9Z)-octadecenoate + reduced [NADPH--hemoprotein reductase] + O2 = (12R),18-dihydroxy-(9Z)-octadecenoate + oxidized [NADPH--hemoprotein reductase] + H2O + H(+). The catalysed reaction is 12-hydroxyoctadecanoate + reduced [NADPH--hemoprotein reductase] + O2 = 12,18-dihydroxyoctadecanoate + oxidized [NADPH--hemoprotein reductase] + H2O + H(+). It catalyses the reaction 5-hydroxy-(6E,8Z,11Z,14Z)-eicosatetraenoate + reduced [NADPH--hemoprotein reductase] + O2 = 5,20-dihydroxy-(6E,8Z,11Z,14Z)-eicosatetraenoate + oxidized [NADPH--hemoprotein reductase] + H2O + H(+). The enzyme catalyses 8-hydroxy-(5Z,9E,11Z,14Z)-eicosatetraenoate + reduced [NADPH--hemoprotein reductase] + O2 = 8,20-dihydroxy-(5Z,9E,11Z,14Z)-eicosatetraenoate + oxidized [NADPH--hemoprotein reductase] + H2O + H(+). It carries out the reaction 12-hydroxy-(5Z,8Z,10E,14Z)-eicosatetraenoate + reduced [NADPH--hemoprotein reductase] + O2 = 12,20-dihydroxy-(5Z,8Z,10E,14Z)-eicosatetraenoate + oxidized [NADPH--hemoprotein reductase] + H2O + H(+). The catalysed reaction is 5-hydroxy-(6E,8Z,11Z,14Z,17Z)-eicosapentaenoate + reduced [NADPH--hemoprotein reductase] + O2 = 5,20-dihydroxy-(6E,8Z,11Z,14Z,17Z)-eicosapentaenoate + oxidized [NADPH--hemoprotein reductase] + H2O + H(+). It catalyses the reaction lipoxin A4 + reduced [NADPH--hemoprotein reductase] + O2 = 20-hydroxy-lipoxin A4 + oxidized [NADPH--hemoprotein reductase] + H2O + H(+). The enzyme catalyses lipoxin B4 + reduced [NADPH--hemoprotein reductase] + O2 = 20-hydroxy-lipoxin B4 + oxidized [NADPH--hemoprotein reductase] + H2O + H(+). It carries out the reaction 22-hydroxydocosanoate + reduced [NADPH--hemoprotein reductase] + O2 = 22-oxodocosanoate + oxidized [NADPH--hemoprotein reductase] + 2 H2O + H(+). The catalysed reaction is 22-oxodocosanoate + reduced [NADPH--hemoprotein reductase] + O2 = docosanedioate + oxidized [NADPH--hemoprotein reductase] + H2O + 2 H(+). It catalyses the reaction docosanoate + reduced [NADPH--hemoprotein reductase] + O2 = 22-hydroxydocosanoate + oxidized [NADPH--hemoprotein reductase] + H2O + H(+). The enzyme catalyses tetracosanoate + reduced [NADPH--hemoprotein reductase] + O2 = 24-hydroxytetracosanoate + oxidized [NADPH--hemoprotein reductase] + H2O + H(+). It carries out the reaction hexacosanoate + reduced [NADPH--hemoprotein reductase] + O2 = 26-hydroxyhexacosanoate + oxidized [NADPH--hemoprotein reductase] + H2O + H(+). The catalysed reaction is 26-hydroxyhexacosanoate + reduced [NADPH--hemoprotein reductase] + O2 = 26-oxohexacosanoate + oxidized [NADPH--hemoprotein reductase] + 2 H2O + H(+). It catalyses the reaction 26-oxohexacosanoate + reduced [NADPH--hemoprotein reductase] + O2 = hexacosanedioate + oxidized [NADPH--hemoprotein reductase] + H2O + 2 H(+). The enzyme catalyses 3-hydroxyoctadecanoate + reduced [NADPH--hemoprotein reductase] + O2 = 3,18-dihydroxyoctadecanoate + oxidized [NADPH--hemoprotein reductase] + H2O + H(+). It carries out the reaction 3-hydroxyhexadecanoate + reduced [NADPH--hemoprotein reductase] + O2 = 3,16-dihydroxyhexadecanoate + oxidized [NADPH--hemoprotein reductase] + H2O + H(+). The protein operates within lipid metabolism; leukotriene B4 degradation. It participates in lipid metabolism; arachidonate metabolism. Inhibited by carbon monoxide (CO). Functionally, a cytochrome P450 monooxygenase involved in the metabolism of various endogenous substrates, including fatty acids and their oxygenated derivatives (oxylipins). Mechanistically, uses molecular oxygen inserting one oxygen atom into a substrate, and reducing the second into a water molecule, with two electrons provided by NADPH via cytochrome P450 reductase (CPR; NADPH-ferrihemoprotein reductase). May play a role in inactivation of pro-inflammatory and anti-inflammatory oxylipins during the resolution of inflammation. Its function is as follows. Catalyzes predominantly the oxidation of the terminal carbon (omega-oxidation) of oxylipins in myeloid cells, displaying higher affinity for arachidonate metabolite leukotriene B4 (LTB4). Inactivates LTB4 via three successive oxidative transformations to 20-hydroxy-LTB4, then to 20-oxo-LTB4 and to 20-carboxy-LTB4. Has omega-hydroxylase activity toward long-chain fatty acid epoxides with preference for 8,9-epoxy-(5Z,11Z,14Z)-eicosatrienoate (EET) and 9,10-epoxyoctadecanoate. Omega-hydroxylates monohydroxy polyunsaturated fatty acids (PUFAs), including hydroxyeicosatetraenoates (HETEs) and hydroxyeicosapentaenoates (HEPEs), to dihydroxy compounds. Contributes to the degradation of saturated very long-chain fatty acids (VLCFAs) such as docosanoic acid, by catalyzing successive omega-oxidations to the corresponding dicarboxylic acid, thereby initiating chain shortening. Has low hydroxylase activity toward PUFAs. In terms of biological role, catalyzes predominantly the oxidation of the terminal carbon (omega-oxidation) of polyunsaturated fatty acids (PUFAs). Participates in the conversion of arachidonic acid to 20-hydroxyeicosatetraenoic acid (20-HETE), a signaling molecule acting both as vasoconstrictive and natriuretic with overall effect on arterial blood pressure. Has high omega-hydroxylase activity toward other PUFAs, including eicosatrienoic acid (ETA), eicosapentaenoic acid (EPA) and docosahexaenoic acid (DHA). Can also catalyze the oxidation of the penultimate carbon (omega-1 oxidation) of PUFAs with lower efficiency. Contributes to the degradation of saturated very long-chain fatty acids (VLCFAs) such as docosanoic acid and hexacosanoic acid, by catalyzing successive omega-oxidations to the corresponding dicarboxylic acids, thereby initiating chain shortening. Omega-hydroxylates long-chain 3-hydroxy fatty acids, likely initiating the oxidative conversion to the corresponding 3-hydroxydicarboxylic fatty acids. Has omega-hydroxylase activity toward long-chain fatty acid epoxides with preference for 8,9-epoxy-(5Z,11Z,14Z)-eicosatrienoate (EET) and 9,10-epoxyoctadecanoate. This chain is Cytochrome P450 4F3, found in Homo sapiens (Human).